A 226-amino-acid chain; its full sequence is MTVLCVTGTCTGVGKTVVTAALASQANQAGIDVVVCKPVQTGTGIGDDDLAEIGRLSGVTELVGLARYPLPMAPVAAAEQAGQPLPSRDQLVQHIRGLDRPGRLTLVEGAGGLLVELADSGGTLRDLAVDLGAAMLVVVAAGLGTLNHTALTLEALAAQKVSCAGLVLGSWPAHPGLVESSNRDALARLAPMRAVLSAGAAQLSVADFAVMSAGAFDREWVATLVG.

Position 12–17 (Gly-12–Val-17) interacts with ATP. A Mg(2+)-binding site is contributed by Thr-16. The active site involves Lys-37. Thr-41 lines the substrate pocket. ATP contacts are provided by residues Asp-49, Glu-108 to Gly-111, and Gly-169 to Ser-170. 2 residues coordinate Mg(2+): Asp-49 and Glu-108.

This sequence belongs to the dethiobiotin synthetase family. As to quaternary structure, homodimer. Mg(2+) serves as cofactor.

The protein localises to the cytoplasm. It carries out the reaction (7R,8S)-7,8-diammoniononanoate + CO2 + ATP = (4R,5S)-dethiobiotin + ADP + phosphate + 3 H(+). The protein operates within cofactor biosynthesis; biotin biosynthesis; biotin from 7,8-diaminononanoate: step 1/2. Functionally, catalyzes a mechanistically unusual reaction, the ATP-dependent insertion of CO2 between the N7 and N8 nitrogen atoms of 7,8-diaminopelargonic acid (DAPA, also called 7,8-diammoniononanoate) to form a ureido ring. This is ATP-dependent dethiobiotin synthetase BioD from Mycobacterium marinum (strain ATCC BAA-535 / M).